The chain runs to 192 residues: Elongation factor P (192 aa).

The protein belongs to the elongation factor P family.

The protein localises to the cytoplasm. It participates in protein biosynthesis; polypeptide chain elongation. Functionally, involved in peptide bond synthesis. Stimulates efficient translation and peptide-bond synthesis on native or reconstituted 70S ribosomes in vitro. Probably functions indirectly by altering the affinity of the ribosome for aminoacyl-tRNA, thus increasing their reactivity as acceptors for peptidyl transferase. The sequence is that of Elongation factor P from Borreliella afzelii (strain PKo) (Borrelia afzelii).